The sequence spans 291 residues: tRNA-cytidine(32) 2-sulfurtransferase (291 aa).

A PP-loop motif motif is present at residues 36-41 (SGGKDS). Residues cysteine 111, cysteine 114, and cysteine 202 each contribute to the [4Fe-4S] cluster site. Residues 258-291 (RDPWLDAEDEEAEDCGEPPAGDGVVSLGGARGGR) are disordered. Residues 262–273 (LDAEDEEAEDCG) are compositionally biased toward acidic residues.

This sequence belongs to the TtcA family. As to quaternary structure, homodimer. Mg(2+) serves as cofactor. The cofactor is [4Fe-4S] cluster.

Its subcellular location is the cytoplasm. It catalyses the reaction cytidine(32) in tRNA + S-sulfanyl-L-cysteinyl-[cysteine desulfurase] + AH2 + ATP = 2-thiocytidine(32) in tRNA + L-cysteinyl-[cysteine desulfurase] + A + AMP + diphosphate + H(+). The protein operates within tRNA modification. In terms of biological role, catalyzes the ATP-dependent 2-thiolation of cytidine in position 32 of tRNA, to form 2-thiocytidine (s(2)C32). The sulfur atoms are provided by the cysteine/cysteine desulfurase (IscS) system. This is tRNA-cytidine(32) 2-sulfurtransferase from Anaeromyxobacter dehalogenans (strain 2CP-1 / ATCC BAA-258).